The primary structure comprises 282 residues: Bifunctional protein FolD (282 aa).

Residues glycine 165 to serine 167 and isoleucine 231 each bind NADP(+).

Belongs to the tetrahydrofolate dehydrogenase/cyclohydrolase family. In terms of assembly, homodimer.

It catalyses the reaction (6R)-5,10-methylene-5,6,7,8-tetrahydrofolate + NADP(+) = (6R)-5,10-methenyltetrahydrofolate + NADPH. The catalysed reaction is (6R)-5,10-methenyltetrahydrofolate + H2O = (6R)-10-formyltetrahydrofolate + H(+). It functions in the pathway one-carbon metabolism; tetrahydrofolate interconversion. Catalyzes the oxidation of 5,10-methylenetetrahydrofolate to 5,10-methenyltetrahydrofolate and then the hydrolysis of 5,10-methenyltetrahydrofolate to 10-formyltetrahydrofolate. The chain is Bifunctional protein FolD from Francisella tularensis subsp. novicida (strain U112).